The chain runs to 347 residues: Rhodopsin (347 aa).

At 1–33 (TEGPDFYIPMVNTTGVVRSPYEYPQYYLVNPAA) the chain is on the extracellular side. Asparagine 12 is a glycosylation site (N-linked (GlcNAc...) asparagine). The helical transmembrane segment at 34 to 58 (YAVLGAYMFFLIIVGFPINFLTLYV) threads the bilayer. The Cytoplasmic segment spans residues 59 to 70 (TLEHKKLRTPLN). The chain crosses the membrane as a helical span at residues 71-93 (YILLNLAVADLFMVIGGFTTTMY). The Extracellular segment spans residues 94 to 107 (SSMHGYFVLGRLGC). A disulfide bridge connects residues cysteine 107 and cysteine 184. A helical membrane pass occupies residues 108 to 130 (NIEGFFATLGGMISLWSLAVLAI). The 'Ionic lock' involved in activated form stabilization motif lies at 131–133 (ERW). Over 131–149 (ERWVVVCKPISNFRFGENH) the chain is Cytoplasmic. Residues 150–170 (AIMGVSLTWVMALACTVPPLV) traverse the membrane as a helical segment. Residues 171–199 (GWSRYIPEGMQCACGIDYYTRAEGYNNES) lie on the Extracellular side of the membrane. Asparagine 197 carries N-linked (GlcNAc...) asparagine glycosylation. The chain crosses the membrane as a helical span at residues 200–221 (FVIYMFTFHFLFPMFIIFFCYG). Residues 222–249 (RLLCAVKEAAAAQQESETTQRAEREVTR) are Cytoplasmic-facing. A helical transmembrane segment spans residues 250–271 (MVILMVIGYLVCWLPYASVAWF). Topologically, residues 272-283 (IFTHKGSEFGPL) are extracellular. The chain crosses the membrane as a helical span at residues 284 to 305 (FMAVPSFFAKSSSIYNPIIYIC). N6-(retinylidene)lysine is present on lysine 293. The Cytoplasmic portion of the chain corresponds to 306–347 (MNKQFRQCMITTLFCGKNPFEGQEEDSSTKTEASSASSVSPA). Cysteine 320 is lipidated: S-palmitoyl cysteine. Residues 326 to 347 (EGQEEDSSTKTEASSASSVSPA) are disordered. Over residues 335–347 (KTEASSASSVSPA) the composition is skewed to low complexity.

This sequence belongs to the G-protein coupled receptor 1 family. Opsin subfamily. Post-translationally, phosphorylated on some or all of the serine and threonine residues present in the C-terminal region. In terms of processing, contains one covalently linked retinal chromophore.

It is found in the membrane. Its subcellular location is the cell projection. The protein localises to the cilium. It localises to the photoreceptor outer segment. Functionally, photoreceptor required for image-forming vision at low light intensity. While most salt water fish species use retinal as chromophore, most freshwater fish use 3-dehydroretinal, or a mixture of retinal and 3-dehydroretinal. Light-induced isomerization of 11-cis to all-trans retinal triggers a conformational change that activates signaling via G-proteins. Subsequent receptor phosphorylation mediates displacement of the bound G-protein alpha subunit by arrestin and terminates signaling. The protein is Rhodopsin (rho) of Sargocentron spiniferum (Sabre squirrelfish).